Consider the following 932-residue polypeptide: Probable UDP-N-acetylglucosamine--peptide N-acetylglucosaminyltransferase SPINDLY (932 aa).

Positions 1–15 (MAWTEKDVENGKESD) are enriched in basic and acidic residues. The interval 1 to 39 (MAWTEKDVENGKESDSLGNNGFLKGVQSSSDSKGSPVRI) is disordered. TPR repeat units follow at residues 48 to 81 (GKDA…DSGS), 82 to 115 (IESL…DPQN), 116 to 149 (ACAL…DPSY), 157 to 190 (AIVL…DSHY), 191 to 224 (APAY…RPMY), 225 to 258 (AEAY…SPNF), 266 to 299 (AIAL…NWHY), 300 to 333 (ADAM…NPHC), 334 to 367 (AEAC…KPNF), 369 to 401 (QSLN…NPTY), and 402 to 435 (AEAY…DPDS). A catalytic region region spans residues 436 to 932 (RNAGQNRLLA…NQAGNPGKQS (497 aa)). The disordered stretch occupies residues 881–902 (VSPIEKTRISASKDGPIKENGF).

This sequence belongs to the glycosyltransferase 41 family. O-GlcNAc transferase subfamily. As to expression, expressed in stems, leaves and flowers. Expressed during all stages of corolla maturation.

It localises to the nucleus. The catalysed reaction is L-seryl-[protein] + UDP-N-acetyl-alpha-D-glucosamine = 3-O-(N-acetyl-beta-D-glucosaminyl)-L-seryl-[protein] + UDP + H(+). The enzyme catalyses L-threonyl-[protein] + UDP-N-acetyl-alpha-D-glucosamine = 3-O-(N-acetyl-beta-D-glucosaminyl)-L-threonyl-[protein] + UDP + H(+). Its pathway is protein modification; protein glycosylation. Probable O-linked N-acetylglucosamine transferase (OGT) involved in various processes such as gibberellin (GA) signaling pathway. OGTs catalyze the addition of nucleotide-activated sugars directly onto the polypeptide through O-glycosidic linkage with the hydroxyl of serine or threonine. Probably acts by adding O-linked sugars to yet unknown proteins. The protein is Probable UDP-N-acetylglucosamine--peptide N-acetylglucosaminyltransferase SPINDLY (SPY) of Petunia hybrida (Petunia).